The primary structure comprises 393 residues: Aspartate aminotransferase (393 aa).

The L-aspartate site is built by Gly-38, Trp-124, and Asn-174. Residue Lys-237 is modified to N6-(pyridoxal phosphate)lysine.

Belongs to the class-I pyridoxal-phosphate-dependent aminotransferase family. In terms of assembly, homodimer. The cofactor is pyridoxal 5'-phosphate.

The protein localises to the cytoplasm. It carries out the reaction L-aspartate + 2-oxoglutarate = oxaloacetate + L-glutamate. In Geobacillus stearothermophilus (Bacillus stearothermophilus), this protein is Aspartate aminotransferase (aspC).